We begin with the raw amino-acid sequence, 222 residues long: 2-C-methyl-D-erythritol 4-phosphate cytidylyltransferase (222 aa).

The protein belongs to the IspD/TarI cytidylyltransferase family. IspD subfamily.

It catalyses the reaction 2-C-methyl-D-erythritol 4-phosphate + CTP + H(+) = 4-CDP-2-C-methyl-D-erythritol + diphosphate. Its pathway is isoprenoid biosynthesis; isopentenyl diphosphate biosynthesis via DXP pathway; isopentenyl diphosphate from 1-deoxy-D-xylulose 5-phosphate: step 2/6. Functionally, catalyzes the formation of 4-diphosphocytidyl-2-C-methyl-D-erythritol from CTP and 2-C-methyl-D-erythritol 4-phosphate (MEP). The polypeptide is 2-C-methyl-D-erythritol 4-phosphate cytidylyltransferase (Porphyromonas gingivalis (strain ATCC 33277 / DSM 20709 / CIP 103683 / JCM 12257 / NCTC 11834 / 2561)).